We begin with the raw amino-acid sequence, 397 residues long: S-adenosylmethionine:tRNA ribosyltransferase-isomerase (397 aa).

This sequence belongs to the QueA family. Monomer.

The protein resides in the cytoplasm. The catalysed reaction is 7-aminomethyl-7-carbaguanosine(34) in tRNA + S-adenosyl-L-methionine = epoxyqueuosine(34) in tRNA + adenine + L-methionine + 2 H(+). It functions in the pathway tRNA modification; tRNA-queuosine biosynthesis. Its function is as follows. Transfers and isomerizes the ribose moiety from AdoMet to the 7-aminomethyl group of 7-deazaguanine (preQ1-tRNA) to give epoxyqueuosine (oQ-tRNA). This is S-adenosylmethionine:tRNA ribosyltransferase-isomerase from Nostoc sp. (strain PCC 7120 / SAG 25.82 / UTEX 2576).